The sequence spans 676 residues: ATP-dependent zinc metalloprotease FtsH (676 aa).

Residues 1–12 (MSFFDKIFKKFH) are Cytoplasmic-facing. Residues 13 to 33 (MGVLYFAVILIGATFIYCYFT) traverse the membrane as a helical segment. The Extracellular portion of the chain corresponds to 34–115 (KHEKKDNNTF…DPRPWNGYEH (82 aa)). A helical transmembrane segment spans residues 116–136 (VFWVFRQCLTMLFFYCFFLFF). Over 137–676 (ADTIKQMGQE…EVLSTDSEQT (540 aa)) the chain is Cytoplasmic. Residue 212-219 (GPPGTGKT) participates in ATP binding. H433 provides a ligand contact to Zn(2+). The active site involves E434. 2 residues coordinate Zn(2+): H437 and D509. The segment at 610 to 676 (EKEETNAPTQ…EVLSTDSEQT (67 aa)) is disordered. Positions 615 to 636 (NAPTQTTSQMSSNNETTNTDKT) are enriched in polar residues. The segment covering 650–667 (NQESNESNPNNNEKASPE) has biased composition (low complexity).

The protein in the central section; belongs to the AAA ATPase family. In the C-terminal section; belongs to the peptidase M41 family. As to quaternary structure, homohexamer. The cofactor is Zn(2+).

Its subcellular location is the cell membrane. Functionally, acts as a processive, ATP-dependent zinc metallopeptidase for both cytoplasmic and membrane proteins. Plays a role in the quality control of integral membrane proteins. This Aster yellows witches'-broom phytoplasma (strain AYWB) protein is ATP-dependent zinc metalloprotease FtsH.